The following is a 325-amino-acid chain: UDP-N-acetylglucosamine transporter (325 aa).

The next 8 membrane-spanning stretches (helical) occupy residues 8–24 (VSLGILVFQTTSLVLTM), 42–58 (AVVVAELLKIMACILLV), 138–154 (VYQWLSLVILMTGVAFV), 173–189 (FVGLMAVLTACFSSGFA), 209–225 (IQLGFFGSIFGLMGVYI), 246–262 (IVVVLQALGGLVIAAVI), 268–284 (ILKGFATSLSIILSTLI), and 295–311 (TSVFFLGAILVITATFL).

This sequence belongs to the nucleotide-sugar transporter family. SLC35A subfamily. Interacts with SLC35A2; the interaction is reduced in the presence of SLC35A4. Found in a complex with SLC35A2 and SLC35A4. Interacts with MGAT4B. Post-translationally, O-Glcnacylation regulates the stability of SLC35A3 and the specific complex formation with MGAT4B.

It localises to the golgi apparatus membrane. The catalysed reaction is UMP(out) + UDP-N-acetyl-alpha-D-glucosamine(in) = UMP(in) + UDP-N-acetyl-alpha-D-glucosamine(out). Transports diphosphate-N-acetylglucosamine (UDP-GlcNAc) from the cytosol into the lumen of the Golgi apparatus, functioning as an antiporter that exchanges UDP-N-acetyl-alpha-D-glucosamine for UMP. May supply UDP-GlcNAc as substrate for Golgi-resident glycosyltransferases that generate highly branched, multiantennary complex N-glycans and keratan sulfate. However, the exact role of SLC35A3 still needs to be elucidated, it could be a member of a catalytically more efficient multiprotein complex rather than function independently as a single transporter. The sequence is that of UDP-N-acetylglucosamine transporter (SLC35A3) from Homo sapiens (Human).